The primary structure comprises 36 residues: Beta/delta/mu-theraphotoxin-Pv1 (36 aa).

3 disulfide bridges follow: Cys3-Cys17, Cys10-Cys22, and Cys16-Cys30. Phe36 is subject to Phenylalanine amide.

It belongs to the neurotoxin 10 (Hwtx-1) family. In terms of tissue distribution, expressed by the venom gland.

The protein localises to the secreted. Functionally, gating-modifier toxin that targets voltage-gated sodium channels. Inhibits the inactivation of Nav1.7/SCN9A. This is Beta/delta/mu-theraphotoxin-Pv1 from Poecilotheria vittata (Ghost ornamental tarantula).